The chain runs to 599 residues: Elongation factor 4 (599 aa).

The region spanning 2–184 is the tr-type G domain; the sequence is KNIRNFSIIA…RLVRDIPPPQ (183 aa). GTP-binding positions include 14-19 and 131-134; these read DHGKST and NKID.

It belongs to the TRAFAC class translation factor GTPase superfamily. Classic translation factor GTPase family. LepA subfamily.

The protein resides in the cell inner membrane. It carries out the reaction GTP + H2O = GDP + phosphate + H(+). Required for accurate and efficient protein synthesis under certain stress conditions. May act as a fidelity factor of the translation reaction, by catalyzing a one-codon backward translocation of tRNAs on improperly translocated ribosomes. Back-translocation proceeds from a post-translocation (POST) complex to a pre-translocation (PRE) complex, thus giving elongation factor G a second chance to translocate the tRNAs correctly. Binds to ribosomes in a GTP-dependent manner. This is Elongation factor 4 from Salmonella paratyphi C (strain RKS4594).